The primary structure comprises 188 residues: Ribosome hibernation promotion factor (188 aa).

A disordered region spans residues 93-125; sequence KTRVNRKKRKESEHEPFPATPETPPETAVDHDK.

The protein belongs to the HPF/YfiA ribosome-associated protein family. Long HPF subfamily. In terms of assembly, interacts with 100S ribosomes.

It localises to the cytoplasm. Required for dimerization of active 70S ribosomes into 100S ribosomes in stationary phase; 100S ribosomes are translationally inactive and sometimes present during exponential growth. In Staphylococcus carnosus (strain TM300), this protein is Ribosome hibernation promotion factor.